The primary structure comprises 98 residues: MTHKYQILYDTLISKINASTNLEINELPILDDDGYDIMYQLYDMFMKKHNLPIKKFIIEEEENKDFDTITFDFKNMPNELKLLLYIFAETHYKALNNL.

This is an uncharacterized protein from Invertebrate iridescent virus 6 (IIV-6).